Consider the following 449-residue polypeptide: UDP-glycosyltransferase 74F2 (449 aa).

UDP-alpha-D-glucose-binding positions include serine 273, 325 to 327 (SPQ), 342 to 350 (HCGWNSTME), and 364 to 367 (WTDQ).

Belongs to the UDP-glycosyltransferase family. In terms of tissue distribution, expressed in seedlings.

Its function is as follows. Glycosyltransferase that glucosylates benzoic acid and derivatives. Substrate preference is benzoic acid &gt; salicylic acid (SA) &gt; 3-hydroxybenzoic acid &gt; 4-hydroxybenzoic acid. Catalyzes the formation of both SA 2-O-beta-D-glucoside (SAG) and SA glucose ester (SGE). Has high affinity for the tryptophan precursor anthranilate. Catalyzes the formation of anthranilate glucose ester. Is the major source of this activity in the plant. In Arabidopsis thaliana (Mouse-ear cress), this protein is UDP-glycosyltransferase 74F2 (UGT74F2).